The chain runs to 357 residues: NmrA-like family domain-containing oxidoreductase notA' (357 aa).

NADP(+)-binding positions include 13–18 (GATGAQ), 39–43 (RKPES), 60–61 (DG), 81–83 (TNS), K140, and 164–167 (YMDV).

It belongs to the NmrA-type oxidoreductase family.

NmrA-like family domain-containing oxidoreductase; part of the gene cluster that mediates the biosynthesis of notoamide, a fungal indole alkaloid that belongs to a family of natural products containing a characteristic bicyclo[2.2.2]diazaoctane core. The first step of notoamide biosynthesis involves coupling of L-proline and L-tryptophan by the bimodular NRPS notE', to produce cyclo-L-tryptophan-L-proline called brevianamide F. The reverse prenyltransferase notF' then acts as a deoxybrevianamide E synthase and converts brevianamide F to deoxybrevianamide E via reverse prenylation at C-2 of the indole ring leading to the bicyclo[2.2.2]diazaoctane core. Deoxybrevianamide E is further hydroxylated at C-6 of the indole ring, likely catalyzed by the cytochrome P450 monooxygenase notG', to yield 6-hydroxy-deoxybrevianamide E. 6-hydroxy-deoxybrevianamide E is a specific substrate of the prenyltransferase notC' for normal prenylation at C-7 to produce 6-hydroxy-7-prenyl-deoxybrevianamide, also called notoamide S. As the proposed pivotal branching point in notoamide biosynthesis, notoamide S can be diverted to notoamide E through an oxidative pyran ring closure putatively catalyzed by either notH' cytochrome P450 monooxygenase or the notD' FAD-linked oxidoreductase. This step would be followed by an indole 2,3-epoxidation-initiated pinacol-like rearrangement catalyzed by the notB' FAD-dependent monooxygenase leading to the formation of notoamide C and notoamide D. On the other hand notoamide S is converted to notoamide T by notH' (or notD'), a bifunctional oxidase that also functions as the intramolecular Diels-Alderase responsible for generation of (-)-notoamide T. To generate antipodal (+)-notoaminide T, notH (or notD) in Aspergillus strain MF297-2 is expected to catalyze a Diels-Alder reaction leading to the opposite stereochemistry. The remaining oxidoreductase notD' (or notH') likely catalyzes the oxidative pyran ring formation to yield (-)-stephacidin A. The FAD-dependent monooxygenase notI' is highly similar to notB' and is predicted to catalyze a similar conversion from (-)-stephacidin A to (+)-notoamide B via the 2,3-epoxidation of (-)-stephacidin A followed by a pinacol-type rearrangement. Finally, it remains unclear which enzyme could be responsible for the final hydroxylation steps leading to notoamide A and sclerotiamide. The sequence is that of NmrA-like family domain-containing oxidoreductase notA' from Aspergillus versicolor.